Here is a 388-residue protein sequence, read N- to C-terminus: Galactokinase (388 aa).

32-35 contacts substrate; the sequence is EHTD. Residues Ser66 and 123 to 129 each bind ATP; that span reads GASLSSS. 2 residues coordinate Mg(2+): Ser129 and Glu161. Asp173 acts as the Proton acceptor in catalysis. Tyr223 contacts substrate.

This sequence belongs to the GHMP kinase family. GalK subfamily.

The protein localises to the cytoplasm. The enzyme catalyses alpha-D-galactose + ATP = alpha-D-galactose 1-phosphate + ADP + H(+). It functions in the pathway carbohydrate metabolism; galactose metabolism. Its function is as follows. Catalyzes the transfer of the gamma-phosphate of ATP to D-galactose to form alpha-D-galactose-1-phosphate (Gal-1-P). The sequence is that of Galactokinase from Staphylococcus carnosus (strain TM300).